The sequence spans 1057 residues: Carbamoyl phosphate synthase large chain (1057 aa).

A carboxyphosphate synthetic domain region spans residues 1–401 (MPKRDDIQTI…SLLKAIRSLE (401 aa)). Residues arginine 129, arginine 169, glycine 175, glycine 176, lysine 208, isoleucine 210, glutamate 215, glycine 241, isoleucine 242, histidine 243, glutamine 284, and glutamate 298 each coordinate ATP. The 195-residue stretch at 133–327 (RTLMNDLNVP…IAKLAAKIAV (195 aa)) folds into the ATP-grasp 1 domain. Mg(2+) is bound by residues glutamine 284, glutamate 298, and asparagine 300. Residues glutamine 284, glutamate 298, and asparagine 300 each coordinate Mn(2+). The oligomerization domain stretch occupies residues 402–546 (YGVHHLGLPN…YGTYEDENES (145 aa)). The tract at residues 547-929 (IVTDKEKILV…ALYKGLTGSG (383 aa)) is carbamoyl phosphate synthetic domain. In terms of domain architecture, ATP-grasp 2 spans 671–861 (EALLREISVP…MAQLAMRAIM (191 aa)). Residues arginine 707, arginine 746, leucine 748, glutamate 752, glycine 777, valine 778, histidine 779, serine 780, glutamine 820, and glutamate 832 each contribute to the ATP site. Residues glutamine 820, glutamate 832, and asparagine 834 each contribute to the Mg(2+) site. Mn(2+) contacts are provided by glutamine 820, glutamate 832, and asparagine 834. In terms of domain architecture, MGS-like spans 930 to 1057 (FEVKDHGTVL…ESMTFTMRNV (128 aa)). An allosteric domain region spans residues 930-1057 (FEVKDHGTVL…ESMTFTMRNV (128 aa)).

It belongs to the CarB family. In terms of assembly, composed of two chains; the small (or glutamine) chain promotes the hydrolysis of glutamine to ammonia, which is used by the large (or ammonia) chain to synthesize carbamoyl phosphate. Tetramer of heterodimers (alpha,beta)4. Mg(2+) is required as a cofactor. Mn(2+) serves as cofactor.

The catalysed reaction is hydrogencarbonate + L-glutamine + 2 ATP + H2O = carbamoyl phosphate + L-glutamate + 2 ADP + phosphate + 2 H(+). It carries out the reaction hydrogencarbonate + NH4(+) + 2 ATP = carbamoyl phosphate + 2 ADP + phosphate + 2 H(+). The protein operates within amino-acid biosynthesis; L-arginine biosynthesis; carbamoyl phosphate from bicarbonate: step 1/1. Its pathway is pyrimidine metabolism; UMP biosynthesis via de novo pathway; (S)-dihydroorotate from bicarbonate: step 1/3. In terms of biological role, large subunit of the glutamine-dependent carbamoyl phosphate synthetase (CPSase). CPSase catalyzes the formation of carbamoyl phosphate from the ammonia moiety of glutamine, carbonate, and phosphate donated by ATP, constituting the first step of 2 biosynthetic pathways, one leading to arginine and/or urea and the other to pyrimidine nucleotides. The large subunit (synthetase) binds the substrates ammonia (free or transferred from glutamine from the small subunit), hydrogencarbonate and ATP and carries out an ATP-coupled ligase reaction, activating hydrogencarbonate by forming carboxy phosphate which reacts with ammonia to form carbamoyl phosphate. This is Carbamoyl phosphate synthase large chain from Staphylococcus epidermidis (strain ATCC 35984 / DSM 28319 / BCRC 17069 / CCUG 31568 / BM 3577 / RP62A).